A 361-amino-acid chain; its full sequence is Histidinol-phosphate aminotransferase (361 aa).

Lys219 is subject to N6-(pyridoxal phosphate)lysine.

This sequence belongs to the class-II pyridoxal-phosphate-dependent aminotransferase family. Histidinol-phosphate aminotransferase subfamily. In terms of assembly, homodimer. Pyridoxal 5'-phosphate is required as a cofactor.

The enzyme catalyses L-histidinol phosphate + 2-oxoglutarate = 3-(imidazol-4-yl)-2-oxopropyl phosphate + L-glutamate. Its pathway is amino-acid biosynthesis; L-histidine biosynthesis; L-histidine from 5-phospho-alpha-D-ribose 1-diphosphate: step 7/9. This Acinetobacter baumannii (strain SDF) protein is Histidinol-phosphate aminotransferase.